Reading from the N-terminus, the 488-residue chain is Ribulose bisphosphate carboxylase large chain (488 aa).

The substrate site is built by Asn127 and Thr177. Lys179 functions as the Proton acceptor in the catalytic mechanism. Lys181 is a binding site for substrate. Mg(2+) contacts are provided by Lys205, Asp207, and Glu208. The residue at position 205 (Lys205) is an N6-carboxylysine. His297 acts as the Proton acceptor in catalysis. Arg298, His330, and Ser382 together coordinate substrate.

Belongs to the RuBisCO large chain family. Type I subfamily. Heterohexadecamer of 8 large chains and 8 small chains. Mg(2+) is required as a cofactor.

It localises to the plastid. Its subcellular location is the chloroplast. It carries out the reaction 2 (2R)-3-phosphoglycerate + 2 H(+) = D-ribulose 1,5-bisphosphate + CO2 + H2O. The catalysed reaction is D-ribulose 1,5-bisphosphate + O2 = 2-phosphoglycolate + (2R)-3-phosphoglycerate + 2 H(+). In terms of biological role, ruBisCO catalyzes two reactions: the carboxylation of D-ribulose 1,5-bisphosphate, the primary event in carbon dioxide fixation, as well as the oxidative fragmentation of the pentose substrate in the photorespiration process. Both reactions occur simultaneously and in competition at the same active site. This Emiliania huxleyi (Coccolithophore) protein is Ribulose bisphosphate carboxylase large chain.